The sequence spans 250 residues: Cytochrome c oxidase subunit 2 (250 aa).

Over 1-27 the chain is Mitochondrial intermembrane; that stretch reads MGLLFNNLIMNFDAPSPWGIYFQDSAT. A helical transmembrane segment spans residues 28–61; the sequence is PQMEGLVELHDNIMYYLVVILFGVGWILLSIIRN. Topologically, residues 62-77 are mitochondrial matrix; that stretch reads YISTKSPISHKYLNHG. Residues 78-107 traverse the membrane as a helical segment; the sequence is TLIELIWTITPAVILILIAFPSFKLLYLMD. The Mitochondrial intermembrane segment spans residues 108–250; it reads EVSDPSMSVL…EKFLTWLEEQ (143 aa). Cu cation-binding residues include His-185, Cys-220, Glu-222, Cys-224, His-228, and Met-231. Residue Glu-222 participates in Mg(2+) binding.

Belongs to the cytochrome c oxidase subunit 2 family. Component of the cytochrome c oxidase (complex IV, CIV), a multisubunit enzyme composed of 11 subunits. The complex is composed of a catalytic core of 3 subunits Cox1, Cox2 and Cox3, encoded in the mitochondrial DNA, and 8 supernumerary subunits Cox4, Cox5a/Cox5, Cox6, Cox7, Cox8, Cox7a/Cox9, Cox6b/Cox12 and Cox6a/Cox13, which are encoded in the nuclear genome. The complex exists as a monomer or a dimer and forms respiratory supercomplexes (SCs) in the inner mitochondrial membrane with NADH-ubiquinone oxidoreductase (complex I, CI) and ubiquinol-cytochrome c oxidoreductase (cytochrome b-c1 complex, complex III, CIII), resulting in various different assemblies (supercomplexes I(1)IV(1), I(1)III(3)IV(2), III(2)IV(1) and III(2)IV(2) as well as larger supercomplexes of compositions like I(1)III(2)IV(5-6)). Cu cation serves as cofactor.

It is found in the mitochondrion inner membrane. It catalyses the reaction 4 Fe(II)-[cytochrome c] + O2 + 8 H(+)(in) = 4 Fe(III)-[cytochrome c] + 2 H2O + 4 H(+)(out). In terms of biological role, component of the cytochrome c oxidase, the last enzyme in the mitochondrial electron transport chain which drives oxidative phosphorylation. The respiratory chain contains 3 multisubunit complexes succinate dehydrogenase (complex II, CII), ubiquinol-cytochrome c oxidoreductase (cytochrome b-c1 complex, complex III, CIII) and cytochrome c oxidase (complex IV, CIV), that cooperate to transfer electrons derived from NADH and succinate to molecular oxygen, creating an electrochemical gradient over the inner membrane that drives transmembrane transport and the ATP synthase. Cytochrome c oxidase is the component of the respiratory chain that catalyzes the reduction of oxygen to water. Electrons originating from reduced cytochrome c in the intermembrane space (IMS) are transferred via the dinuclear copper A center (CU(A)) of Cox2 and heme A of Cox1 to the active site in Cox1, a binuclear center (BNC) formed by heme A3 and copper B (CU(B)). The BNC reduces molecular oxygen to 2 water molecules using 4 electrons from cytochrome c in the IMS and 4 protons from the mitochondrial matrix. The protein is Cytochrome c oxidase subunit 2 (cox-2) of Neurospora crassa (strain ATCC 24698 / 74-OR23-1A / CBS 708.71 / DSM 1257 / FGSC 987).